We begin with the raw amino-acid sequence, 432 residues long: Anaerobic glycerol-3-phosphate dehydrogenase subunit B (432 aa).

The protein belongs to the anaerobic G-3-P dehydrogenase subunit B family. In terms of assembly, composed of a catalytic GlpA/B dimer and of membrane bound GlpC. It depends on FMN as a cofactor.

It carries out the reaction a quinone + sn-glycerol 3-phosphate = dihydroxyacetone phosphate + a quinol. It participates in polyol metabolism; glycerol degradation via glycerol kinase pathway; glycerone phosphate from sn-glycerol 3-phosphate (anaerobic route): step 1/1. Conversion of glycerol 3-phosphate to dihydroxyacetone. Uses fumarate or nitrate as electron acceptor. The protein is Anaerobic glycerol-3-phosphate dehydrogenase subunit B of Haemophilus influenzae (strain PittEE).